The primary structure comprises 514 residues: Type-2 serine--tRNA ligase (514 aa).

L-serine is bound at residue Ala-313. Cys-315 contacts Zn(2+). Arg-344 lines the L-serine pocket. ATP is bound by residues 344-346 and 355-356; these read RWE and RV. 361-363 lines the L-serine pocket; the sequence is RGE. Residues Glu-363 and Cys-470 each contribute to the Zn(2+) site. ATP is bound at residue Arg-477.

Belongs to the class-II aminoacyl-tRNA synthetase family. Type-2 seryl-tRNA synthetase subfamily. Homodimer. It depends on Zn(2+) as a cofactor.

Its subcellular location is the cytoplasm. It catalyses the reaction tRNA(Ser) + L-serine + ATP = L-seryl-tRNA(Ser) + AMP + diphosphate + H(+). It carries out the reaction tRNA(Sec) + L-serine + ATP = L-seryl-tRNA(Sec) + AMP + diphosphate + H(+). It functions in the pathway aminoacyl-tRNA biosynthesis; selenocysteinyl-tRNA(Sec) biosynthesis; L-seryl-tRNA(Sec) from L-serine and tRNA(Sec): step 1/1. Functionally, catalyzes the attachment of serine to tRNA(Ser). Is also able to aminoacylate tRNA(Sec) with serine, to form the misacylated tRNA L-seryl-tRNA(Sec), which will be further converted into selenocysteinyl-tRNA(Sec). This chain is Type-2 serine--tRNA ligase, found in Methanococcus maripaludis (strain C5 / ATCC BAA-1333).